The primary structure comprises 32 residues: Potassium channel toxin alpha-KTx 10.6 (32 aa).

3 cysteine pairs are disulfide-bonded: Cys3-Cys22, Cys8-Cys27, and Cys12-Cys29.

As to expression, expressed by the venom gland.

The protein resides in the secreted. Functionally, blocks human voltage-gated potassium (Kv) channels Kv1.2/KCNA2 and Kv1.3/KCNA3. Does not block human Kv1.1 at 100nM concentration. The chain is Potassium channel toxin alpha-KTx 10.6 from Centruroides bonito (Scorpion).